The chain runs to 118 residues: Nucleoid-associated protein TM_0687 (118 aa).

Belongs to the YbaB/EbfC family. As to quaternary structure, homodimer.

The protein resides in the cytoplasm. The protein localises to the nucleoid. Its function is as follows. Binds to DNA and alters its conformation. May be involved in regulation of gene expression, nucleoid organization and DNA protection. The sequence is that of Nucleoid-associated protein TM_0687 from Thermotoga maritima (strain ATCC 43589 / DSM 3109 / JCM 10099 / NBRC 100826 / MSB8).